The sequence spans 358 residues: UDP-N-acetylglucosamine--N-acetylmuramyl-(pentapeptide) pyrophosphoryl-undecaprenol N-acetylglucosamine transferase (358 aa).

UDP-N-acetyl-alpha-D-glucosamine is bound by residues 11–13 (TGG), Asn120, Arg161, Ser188, and Gln282.

The protein belongs to the glycosyltransferase 28 family. MurG subfamily.

The protein localises to the cell inner membrane. It carries out the reaction di-trans,octa-cis-undecaprenyl diphospho-N-acetyl-alpha-D-muramoyl-L-alanyl-D-glutamyl-meso-2,6-diaminopimeloyl-D-alanyl-D-alanine + UDP-N-acetyl-alpha-D-glucosamine = di-trans,octa-cis-undecaprenyl diphospho-[N-acetyl-alpha-D-glucosaminyl-(1-&gt;4)]-N-acetyl-alpha-D-muramoyl-L-alanyl-D-glutamyl-meso-2,6-diaminopimeloyl-D-alanyl-D-alanine + UDP + H(+). It participates in cell wall biogenesis; peptidoglycan biosynthesis. Cell wall formation. Catalyzes the transfer of a GlcNAc subunit on undecaprenyl-pyrophosphoryl-MurNAc-pentapeptide (lipid intermediate I) to form undecaprenyl-pyrophosphoryl-MurNAc-(pentapeptide)GlcNAc (lipid intermediate II). The polypeptide is UDP-N-acetylglucosamine--N-acetylmuramyl-(pentapeptide) pyrophosphoryl-undecaprenol N-acetylglucosamine transferase (Parasynechococcus marenigrum (strain WH8102)).